A 31-amino-acid polypeptide reads, in one-letter code: Cytochrome b6-f complex subunit 6 (31 aa).

A helical membrane pass occupies residues I3–F23.

It belongs to the PetL family. The 4 large subunits of the cytochrome b6-f complex are cytochrome b6, subunit IV (17 kDa polypeptide, PetD), cytochrome f and the Rieske protein, while the 4 small subunits are PetG, PetL, PetM and PetN. The complex functions as a dimer.

It localises to the plastid. The protein localises to the chloroplast thylakoid membrane. In terms of biological role, component of the cytochrome b6-f complex, which mediates electron transfer between photosystem II (PSII) and photosystem I (PSI), cyclic electron flow around PSI, and state transitions. PetL is important for photoautotrophic growth as well as for electron transfer efficiency and stability of the cytochrome b6-f complex. The polypeptide is Cytochrome b6-f complex subunit 6 (Gnetum parvifolium (Small-leaved jointfir)).